The following is a 641-amino-acid chain: Mannosyl-oligosaccharide 1,2-alpha-mannosidase IB (641 aa).

Thr-2 is subject to N-acetylthreonine. At 2-36 the chain is on the cytoplasmic side; sequence TTPALLPLSGRRIPPLNLGPPSFPHHRATLRLSEK. The chain crosses the membrane as a helical; Signal-anchor for type II membrane protein span at residues 37–57; it reads FILLLILSAFITLCFGAFFFL. At 58–641 the chain is on the lumenal side; that stretch reads PDSSKHKRFD…TTLSGNPAVR (584 aa). A disordered region spans residues 153–175; that stretch reads NKPLPPVPIPNLVGIRGGDPEDN. Residues Cys-462 and Cys-494 are joined by a disulfide bond. Glu-508 functions as the Proton donor in the catalytic mechanism. Residue Thr-619 coordinates Ca(2+). N-linked (GlcNAc...) asparagine glycosylation is present at Asn-631.

It belongs to the glycosyl hydrolase 47 family. Ca(2+) is required as a cofactor. In terms of tissue distribution, highest levels of expression in placenta and testis.

The protein resides in the golgi apparatus membrane. It carries out the reaction N(4)-(alpha-D-Man-(1-&gt;2)-alpha-D-Man-(1-&gt;2)-alpha-D-Man-(1-&gt;3)-[alpha-D-Man-(1-&gt;2)-alpha-D-Man-(1-&gt;3)-[alpha-D-Man-(1-&gt;2)-alpha-D-Man-(1-&gt;6)]-alpha-D-Man-(1-&gt;6)]-beta-D-Man-(1-&gt;4)-beta-D-GlcNAc-(1-&gt;4)-beta-D-GlcNAc)-L-asparaginyl-[protein] (N-glucan mannose isomer 9A1,2,3B1,2,3) + 4 H2O = N(4)-(alpha-D-Man-(1-&gt;3)-[alpha-D-Man-(1-&gt;3)-[alpha-D-Man-(1-&gt;6)]-alpha-D-Man-(1-&gt;6)]-beta-D-Man-(1-&gt;4)-beta-D-GlcNAc-(1-&gt;4)-beta-D-GlcNAc)-L-asparaginyl-[protein] (N-glucan mannose isomer 5A1,2) + 4 beta-D-mannose. The catalysed reaction is N(4)-(alpha-D-Man-(1-&gt;2)-alpha-D-Man-(1-&gt;2)-alpha-D-Man-(1-&gt;3)-[alpha-D-Man-(1-&gt;3)-[alpha-D-Man-(1-&gt;2)-alpha-D-Man-(1-&gt;6)]-alpha-D-Man-(1-&gt;6)]-beta-D-Man-(1-&gt;4)-beta-D-GlcNAc-(1-&gt;4)-beta-D-GlcNAc)-L-asparaginyl-[protein] (N-glucan mannose isomer 8A1,2,3B1,3) + 3 H2O = N(4)-(alpha-D-Man-(1-&gt;3)-[alpha-D-Man-(1-&gt;3)-[alpha-D-Man-(1-&gt;6)]-alpha-D-Man-(1-&gt;6)]-beta-D-Man-(1-&gt;4)-beta-D-GlcNAc-(1-&gt;4)-beta-D-GlcNAc)-L-asparaginyl-[protein] (N-glucan mannose isomer 5A1,2) + 3 beta-D-mannose. It participates in protein modification; protein glycosylation. With respect to regulation, inhibited by both 1-deoxymannojirimycin and kifunensine. Functionally, involved in the maturation of Asn-linked oligosaccharides. Progressively trim alpha-1,2-linked mannose residues from Man(9)GlcNAc(2) to produce Man(5)GlcNAc(2). This Homo sapiens (Human) protein is Mannosyl-oligosaccharide 1,2-alpha-mannosidase IB (MAN1A2).